The chain runs to 254 residues: Ribosomal RNA small subunit methyltransferase A (254 aa).

Residues Asn12, Leu14, Gly38, Glu59, Asp83, and Asn100 each coordinate S-adenosyl-L-methionine.

Belongs to the class I-like SAM-binding methyltransferase superfamily. rRNA adenine N(6)-methyltransferase family. RsmA subfamily.

It localises to the cytoplasm. The enzyme catalyses adenosine(1518)/adenosine(1519) in 16S rRNA + 4 S-adenosyl-L-methionine = N(6)-dimethyladenosine(1518)/N(6)-dimethyladenosine(1519) in 16S rRNA + 4 S-adenosyl-L-homocysteine + 4 H(+). Functionally, specifically dimethylates two adjacent adenosines (A1518 and A1519) in the loop of a conserved hairpin near the 3'-end of 16S rRNA in the 30S particle. May play a critical role in biogenesis of 30S subunits. In Mycoplasma mobile (strain ATCC 43663 / 163K / NCTC 11711) (Mesomycoplasma mobile), this protein is Ribosomal RNA small subunit methyltransferase A.